Here is a 245-residue protein sequence, read N- to C-terminus: Short-chain dehydrogenase/reductase pyiH (245 aa).

Residues Ile-18, Arg-42, Asp-68, and Asn-95 each coordinate NADP(+). Ser-150 serves as the catalytic Proton donor.

Belongs to the short-chain dehydrogenases/reductases (SDR) family.

It participates in mycotoxin biosynthesis. Its function is as follows. Short-chain dehydrogenase/reductase; part of the gene cluster that mediates the biosynthesis of the mycotoxin pyrichalasin H, a tyrosine-derived cytochalasan that inhibits the growth of rice seedlings, but also inhibits lymphocyte capping and actin polymerization and alters cell morphology. Pyrichalasin H is indicated as the responsible agent for the genus-specific pathogenicity of M.grisea toward crabgrass. The first step in the pathway is catalyzed by the O-methyltransferase pyiA which methylates free tyrosine to generate the precursor O-methyltyrosine. The hybrid PKS-NRPS pyiS, assisted by the enoyl reductase pyiC, are responsible for fusion of the O-methyltyrosine precursor and the polyketide backbone. The polyketide synthase module (PKS) of pyiS is responsible for the synthesis of the polyketide backbone and the downstream nonribosomal peptide synthetase (NRPS) amidates the carboxyl end of the polyketide with the O-methyltyrosine precursor. As the NRPS A-domain demonstrates substrate tolerance, pyiS can also use phenylalanine, tyrosine and even para-chlorophenylalanine as amino acid precursor, which leads to the production of novel cytochalasans, including halogenated cytochalasans. Because pyiS lacks a designated enoylreductase (ER) domain, the required activity is provided the enoyl reductase pyiC. Reduction by the hydrolyase pyiE leads to 1,5-dihydropyrrolone, which is substrate for dehydration and intra-molecular Diels-Alder cyclization by the Diels-Alderase pyiF to yield the required isoindolone-fused macrocycle. The tailoring cytochrome P450 monooxygenases piyD and piyG catalyze the hydroxylation at C-18 and C-7, respectivily, whereas the short-chain dehydrogenase/reductase pyiH reduces the carbonyl at C-21 in preparation for the transfer of an acetyl group by the acetyltransferase pyiB. These 3 reactions whose order is not clear yet, lead to the production of O-methylpyrichalasin J, a deacetylated pyrichalasin H. Finally, pyiB to converts O-methylpyrichalasin J into the final product pyrichalasin H via acetylation of C-21. In Pyricularia grisea (Crabgrass-specific blast fungus), this protein is Short-chain dehydrogenase/reductase pyiH.